Reading from the N-terminus, the 105-residue chain is Protamine-2 (105 aa).

The disordered stretch occupies residues 1–74 (MVRYRMRSPS…RRSCRRRRRH (74 aa)). 2 positions are modified to phosphoserine: serine 8 and serine 10. Residues 33 to 42 (NPERVEDYGR) show a composition bias toward basic and acidic residues. A compositionally biased stretch (basic residues) spans 43–74 (THRGHHRHRRCSRKRLHRIHKRRRSCRRRRRH).

It belongs to the protamine P2 family. As to quaternary structure, interacts with TDRP. Post-translationally, proteolytic processing into mature chains is required for histone eviction during spermatogenesis. Transition proteins (TNP1 and TNP2) are required for processing. In terms of tissue distribution, testis.

Its subcellular location is the nucleus. It is found in the chromosome. In terms of biological role, protamines substitute for histones in the chromatin of sperm during the haploid phase of spermatogenesis. They compact sperm DNA into a highly condensed, stable and inactive complex. This chain is Protamine-2 (Prm2), found in Rattus tunneyi (Tunney's rat).